Here is a 398-residue protein sequence, read N- to C-terminus: Transposase for insertion sequence element ISRM5 (398 aa).

This sequence belongs to the transposase mutator family.

Functionally, required for the transposition of the insertion element. This is Transposase for insertion sequence element ISRM5 from Rhizobium meliloti (strain 1021) (Ensifer meliloti).